The primary structure comprises 169 residues: Putative phosphoesterase SAR0985 (169 aa).

His-34 functions as the Proton donor in the catalytic mechanism. Short sequence motifs (HXTX) lie at residues 34–37 and 115–118; these read HVTI and HFTI. Residue His-115 is the Proton acceptor of the active site.

This sequence belongs to the 2H phosphoesterase superfamily. YjcG family.

The polypeptide is Putative phosphoesterase SAR0985 (Staphylococcus aureus (strain MRSA252)).